The sequence spans 337 residues: DNA-directed RNA polymerase subunit alpha (337 aa).

The tract at residues 1 to 226 is alpha N-terminal domain (alpha-NTD); the sequence is MLIAQRPTLT…ELFGLARELN (226 aa). The segment at 243-337 is alpha C-terminal domain (alpha-CTD); the sequence is LAADLALEIE…DTSFAEDEQL (95 aa). Positions 315–337 are disordered; that stretch reads FDPSAVVNDFEDDDTSFAEDEQL. The span at 323 to 337 shows a compositional bias: acidic residues; the sequence is DFEDDDTSFAEDEQL.

The protein belongs to the RNA polymerase alpha chain family. In terms of assembly, homodimer. The RNAP catalytic core consists of 2 alpha, 1 beta, 1 beta' and 1 omega subunit. When a sigma factor is associated with the core the holoenzyme is formed, which can initiate transcription.

The enzyme catalyses RNA(n) + a ribonucleoside 5'-triphosphate = RNA(n+1) + diphosphate. Its function is as follows. DNA-dependent RNA polymerase catalyzes the transcription of DNA into RNA using the four ribonucleoside triphosphates as substrates. The protein is DNA-directed RNA polymerase subunit alpha of Kineococcus radiotolerans (strain ATCC BAA-149 / DSM 14245 / SRS30216).